A 156-amino-acid chain; its full sequence is Small ribosomal subunit protein uS7 (156 aa).

The protein belongs to the universal ribosomal protein uS7 family. As to quaternary structure, part of the 30S ribosomal subunit. Contacts proteins S9 and S11.

In terms of biological role, one of the primary rRNA binding proteins, it binds directly to 16S rRNA where it nucleates assembly of the head domain of the 30S subunit. Is located at the subunit interface close to the decoding center, probably blocks exit of the E-site tRNA. In Hahella chejuensis (strain KCTC 2396), this protein is Small ribosomal subunit protein uS7.